Reading from the N-terminus, the 454-residue chain is Chromosomal replication initiator protein DnaA (454 aa).

The segment at 1–76 is domain I, interacts with DnaA modulators; it reads MNKLKTDLNL…IGASFRILAK (76 aa). A domain II region spans residues 76 to 113; it reads KNPKIIFAQESPGNGEKATGKKIKSLPREDKSSIFESK. Residues 114-330 are domain III, AAA+ region; sequence GLNTKFSFEN…GALNRLCAYA (217 aa). ATP is bound by residues G158, G160, K161, and T162. The domain IV, binds dsDNA stretch occupies residues 331 to 454; that stretch reads SIHKEGKITL…KITEQLTSSQ (124 aa).

The protein belongs to the DnaA family. As to quaternary structure, oligomerizes as a right-handed, spiral filament on DNA at oriC.

It is found in the cytoplasm. Plays an essential role in the initiation and regulation of chromosomal replication. ATP-DnaA binds to the origin of replication (oriC) to initiate formation of the DNA replication initiation complex once per cell cycle. Binds the DnaA box (a 9 base pair repeat at the origin) and separates the double-stranded (ds)DNA. Forms a right-handed helical filament on oriC DNA; dsDNA binds to the exterior of the filament while single-stranded (ss)DNA is stabiized in the filament's interior. The ATP-DnaA-oriC complex binds and stabilizes one strand of the AT-rich DNA unwinding element (DUE), permitting loading of DNA polymerase. After initiation quickly degrades to an ADP-DnaA complex that is not apt for DNA replication. Binds acidic phospholipids. This is Chromosomal replication initiator protein DnaA from Methylacidiphilum infernorum (isolate V4) (Methylokorus infernorum (strain V4)).